The primary structure comprises 295 residues: F-box protein SKIP24 (295 aa).

The F-box; degenerate domain occupies 19-66; the sequence is VKSSTFSYKDLCCISISSRRLFRLSCDDSLWDLLLVHDFPNHIVSASS. Coiled-coil stretches lie at residues 82 to 129 and 167 to 209; these read REKE…SSLQ and EGRL…ESMK. A disordered region spans residues 217–245; sequence KSIRNGDQGSNGKTKKLKTSINYSGDQVS. Positions 235–245 are enriched in polar residues; sequence TSINYSGDQVS.

Part of a SCF (ASK-cullin-F-box) protein ligase complex. Interacts with SKP1A/ASK1 and SPK1B/ASK2.

The protein operates within protein modification; protein ubiquitination. In terms of biological role, component of SCF(ASK-cullin-F-box) E3 ubiquitin ligase complexes, which may mediate the ubiquitination and subsequent proteasomal degradation of target proteins. This is F-box protein SKIP24 (SKIP24) from Arabidopsis thaliana (Mouse-ear cress).